The following is a 1310-amino-acid chain: MDSRDWTQLGCVAYPSPIHPDYHAGPASTIAFDNQDELLWIGTQKGFAGSFIGRELKRFTAFRIHPETDGPLRQFLFVDKGVIFLGSRSVYMAARSGVPIWSIRHESMQDLRAMSFTSKGTSEILVAGWQNKMLVIDVNKGEVVKELPTQDQYSFLKMSRYICAATNKGTVNILDPITFTIKKQWQAHGAFINDLDTSNDFIVTCGGSHRQTHNTPAILDPYVKVFDLKNMSAMNPVPFAPLAAHVRMHPRMLTTAIVVNQAGQIHVTDLLNPSNSQVCYTQPQGVVLHFDVSRTGEGKALADNKHNTYVWGSPNKIQFTEIGIPPRLPDPPQPSLLPPDPDMLEELPLSRIGLPYYREQLFSALPPDIISDVGAPPQQIDPNILSTLTKTDWGYIGPNKTGLQRNQYMDTRSTMKTSNTIRAPKFLSEKARESQTGSEDNTLATNETAMMTPNNDHWSLRPEAPPEYRICEIKYSKFGVDDFDFGFFNNTPYPGLENNITNSYANSLLQVMHYTPLLRNMALQHAATACLADPCLLCELGYVFDMLQKGEGPSCHATNMLRALNHTSNASVSGVLEDIAKDKNPSTLVKNLTMFLFDKISQDYKGTPPISTELERTLFKLNQPPNPLDLVKRLLETDARYQIKCMHCQHVSPRTATTFVNKLCYPAAKPNIRGMKAQRITFSQVLKAGLENEAVNKGYCTKCQRYQNLDQRKIIFNIPAVLALCTEITTAEHRKLWSTPGWLPEEIGIIVDQGHVYCYEGDDLKLHLNRGIHNITVYSLVGTVVNVETKSPQKSHLVATVNVGRAEPESKDQDRWHLFNDFSVRGISKVEALTFNAAWKMPVVVMFQVKAANHRFNMDWKTRLDTSVLFRDNNPHALKTYELLDRETEIPGPDTVIAIDTEFIRLKEREIHIDEDGKSKTIRPISHAIARASVVRGQGSREGVAFIDDYIHIKETIVDYLTEWSGITPTDLDPINSQRNLVSPKTAYKKLWVLVNLGCKFLGHGLSQDFRVINIQVPRNQVIDTSIIFMKPPSQRKISLAFLAWYLLKEDIQQNTHDSIEDAQTALKLYRKYEEFMANGSFHDVLEALYKKGKTLNFKPPRISTGAAKDAGFGAVHRVGTPPVPAPGTTEGSFEISNSSTATTGGSALSATGGMGSASASSSMPSTPVRKPIGLGGPFTVAGVVKPSPATSLDNFGAGAVGTGITTAAATMGGGYGGYGTDGAYWGGPNDMAPTSMIGGSAFIPAKFPPGPPETRGFIPYRPQVLLAEREAAAAAAAAAAAAAANNDVGGRGGVACGNGGAGGEQGKQE.

4 WD repeats span residues 22 to 61 (YHAG…RFTA), 67 to 105 (ETDG…SIRH), 106 to 144 (ESMQ…GEVV), and 145 to 184 (KELP…IKKQ). Residues 318-463 (QFTEIGIPPR…NNDHWSLRPE (146 aa)) form a linker region. In terms of domain architecture, USP spans 463–850 (EAPPEYRICE…MPVVVMFQVK (388 aa)). Zn(2+) is bound by residues histidine 525, cysteine 530, cysteine 535, cysteine 538, cysteine 645, cysteine 648, cysteine 700, and cysteine 703. Residues 897 to 1070 (IAIDTEFIRL…EDAQTALKLY (174 aa)) form the Exonuclease domain. Residues aspartate 900, glutamate 902, aspartate 1009, and aspartate 1062 each contribute to the a divalent metal cation site. The segment at 1121–1169 (TPPVPAPGTTEGSFEISNSSTATTGGSALSATGGMGSASASSSMPSTPV) is disordered. A compositionally biased stretch (low complexity) spans 1139–1168 (SSTATTGGSALSATGGMGSASASSSMPSTP).

Belongs to the peptidase C19 family. PAN2 subfamily. As to quaternary structure, forms a heterotrimer with an asymmetric homodimer of the regulatory subunit par-2/pan3 to form the poly(A)-nuclease (PAN) deadenylation complex. The cofactor is a divalent metal cation.

It localises to the cytoplasm. The enzyme catalyses Exonucleolytic cleavage of poly(A) to 5'-AMP.. Its activity is regulated as follows. Positively regulated by the regulatory subunit par-2/pan3. Functionally, catalytic subunit of the poly(A)-nuclease (PAN) deadenylation complex, one of two cytoplasmic mRNA deadenylases involved in mRNA turnover. PAN specifically shortens poly(A) tails of RNA and the activity is stimulated by poly(A)-binding protein pabp-1. PAN deadenylation is followed by rapid degradation of the shortened mRNA tails by the CCR4-NOT complex. Deadenylated mRNAs are then degraded by two alternative mechanisms, namely exosome-mediated 3'-5' exonucleolytic degradation, or deadenylation-dependent mRNA decaping and subsequent 5'-3' exonucleolytic degradation by rgb-30/xrn1. May also be involved in post-transcriptional maturation of mRNA poly(A) tails. The protein is PAN2-PAN3 deadenylation complex catalytic subunit pan2 (par-1) of Neurospora crassa (strain ATCC 24698 / 74-OR23-1A / CBS 708.71 / DSM 1257 / FGSC 987).